Reading from the N-terminus, the 313-residue chain is Carbamate kinase 2 (313 aa).

Belongs to the carbamate kinase family.

It localises to the cytoplasm. It carries out the reaction hydrogencarbonate + NH4(+) + ATP = carbamoyl phosphate + ADP + H2O + H(+). Its pathway is metabolic intermediate metabolism; carbamoyl phosphate degradation; CO(2) and NH(3) from carbamoyl phosphate: step 1/1. The sequence is that of Carbamate kinase 2 (arcC2) from Staphylococcus aureus (strain USA300).